The chain runs to 21 residues: Serine protease inhibitor 3 (21 aa).

The protein belongs to the protease inhibitor I3 (leguminous Kunitz-type inhibitor) family. As to expression, tubers.

The protein resides in the vacuole. Functionally, inhibits trypsin and chymotrypsin (serine proteases). Does not inhibit elastase, subtilisin, cathepsin L nor papain (serine and cysteine proteases). Protects the plant by inhibiting proteases of invading organisms, decreasing both hyphal growth and zoospores germination of Phytophthora infestans. The polypeptide is Serine protease inhibitor 3 (Solanum tuberosum (Potato)).